Here is a 155-residue protein sequence, read N- to C-terminus: Secreted RxLR effector protein RXLR-C301 (155 aa).

A signal peptide spans 1–24 (MRLYALSVSLLAAITLLACVIASA). The RxLR-dEER motif lies at 34-64 (RRLSQDVSETEITELSESKKPTAQDIDNEER).

Belongs to the RxLR effector family.

It localises to the secreted. It is found in the host cell membrane. Its function is as follows. Secreted effector that does not suppress pattern-triggered immunity (PTI) in plant host. This is Secreted RxLR effector protein RXLR-C301 from Plasmopara halstedii (Downy mildew of sunflower).